The chain runs to 521 residues: Probable glycogen synthase (521 aa).

It belongs to the glycosyltransferase 1 family. Bacterial/plant glycogen synthase subfamily.

The catalysed reaction is [(1-&gt;4)-alpha-D-glucosyl](n) + ADP-alpha-D-glucose = [(1-&gt;4)-alpha-D-glucosyl](n+1) + ADP + H(+). It functions in the pathway glycan biosynthesis; glycogen biosynthesis. Functionally, synthesizes alpha-1,4-glucan chains using ADP-glucose. The protein is Probable glycogen synthase (glgA) of Methanocaldococcus jannaschii (strain ATCC 43067 / DSM 2661 / JAL-1 / JCM 10045 / NBRC 100440) (Methanococcus jannaschii).